The primary structure comprises 626 residues: (+)-3-carene synthase 2, chloroplastic (626 aa).

A chloroplast-targeting transit peptide spans 1–45; the sequence is MSLISAVPLASSCVSKSLISSVREHTALRRAIATLQMSRRGKSVA. Residues Asp-377, Asp-381, and Asp-529 each coordinate Mg(2+). The short motif at 377 to 381 is the DDXXD motif element; sequence DDMYD.

The protein belongs to the terpene synthase family. Tpsd subfamily. The cofactor is Mg(2+). Mn(2+) serves as cofactor.

The protein resides in the plastid. The protein localises to the chloroplast. The catalysed reaction is (2E)-geranyl diphosphate = (+)-car-3-ene + diphosphate. Its pathway is terpene metabolism; oleoresin biosynthesis. It participates in secondary metabolite biosynthesis; terpenoid biosynthesis. In terms of biological role, monoterpene synthase (TPS) involved in the biosynthesis of monoterpene natural products included in conifer oleoresin secretions and volatile emissions; these compounds contribute to biotic and abiotic stress defense against herbivores and pathogens. Catalyzes the conversion of (2E)-geranyl diphosphate (GPP) to (+)-3-carene. This chain is (+)-3-carene synthase 2, chloroplastic, found in Pinus banksiana (Jack pine).